The following is a 339-amino-acid chain: Protein FAM76B (339 aa).

Ala2 carries the post-translational modification N-acetylalanine. Phosphoserine occurs at positions 22 and 148. A disordered region spans residues 144–243; the sequence is EQRKSLGSSH…INQSADSGGT (100 aa). Over residues 148-160 the composition is skewed to low complexity; sequence SLGSSHSNSSSSS. Over residues 167–189 the composition is skewed to basic residues; it reads HHSKHHHHHHHHHHRHSSGHHKV. Ser193 is subject to Phosphoserine. Phosphothreonine is present on Thr215. The span at 215-224 shows a compositional bias: basic and acidic residues; the sequence is TPKKKPKLES. Over residues 228-243 the composition is skewed to polar residues; sequence NGDSSSINQSADSGGT. A coiled-coil region spans residues 248–328; that stretch reads LISQLKEEVM…QVAALSKGKK (81 aa).

This sequence belongs to the FAM76 family. In terms of assembly, interacts with HNRNPA2B1 (via C-terminus); the interaction results in retention of HNRNPA2B1 in the nucleus and inhibition of the NF-kappa-B-mediated inflammatory pathway.

It is found in the nucleus speckle. Negatively regulates the NF-kappa-B-mediated inflammatory pathway by preventing the translocation of HNRNPA2B1 from the nucleus to the cytoplasm. Inhibits the PI3K/Akt/NF-kappa-B pathway-mediated polarization of M1 macrophages by binding to and stabilizing PIK3CD mRNA, resulting in increased levels of PIK3CD protein and increased levels of phosphorylated downstream target AKT which leads to decreased NF-kappa-B signaling. The chain is Protein FAM76B (Fam76b) from Mus musculus (Mouse).